Here is a 345-residue protein sequence, read N- to C-terminus: Esterase (345 aa).

The signal sequence occupies residues 1 to 39 (MSSAMRKTTNSPVVRRLTAAAVALGSCLALAGPAGSAGA). Disulfide bonds link cysteine 73–cysteine 103, cysteine 156–cysteine 180, and cysteine 236–cysteine 294.

Its subcellular location is the secreted. This chain is Esterase (estA), found in Streptomyces scabiei.